A 356-amino-acid polypeptide reads, in one-letter code: Mannonate dehydratase (356 aa).

It belongs to the mannonate dehydratase family. Fe(2+) is required as a cofactor. Requires Mn(2+) as cofactor.

The enzyme catalyses D-mannonate = 2-dehydro-3-deoxy-D-gluconate + H2O. It participates in carbohydrate metabolism; pentose and glucuronate interconversion. In terms of biological role, catalyzes the dehydration of D-mannonate. In Levilactobacillus brevis (strain ATCC 367 / BCRC 12310 / CIP 105137 / JCM 1170 / LMG 11437 / NCIMB 947 / NCTC 947) (Lactobacillus brevis), this protein is Mannonate dehydratase.